We begin with the raw amino-acid sequence, 418 residues long: Nuclear hormone receptor family member nhr-209 (418 aa).

The segment at residues proline 43 to alanine 121 is a DNA-binding region (nuclear receptor). 2 NR C4-type zinc fingers span residues cysteine 46 to cysteine 66 and cysteine 82 to cysteine 104. The NR LBD domain occupies threonine 174 to glutamate 414. Residues glutamate 403 to glutamate 414 are AF-2.

The protein belongs to the nuclear hormone receptor family.

The protein resides in the nucleus. Transcriptional regulator. Plays a role in modulation of lifespan and immunity. This chain is Nuclear hormone receptor family member nhr-209, found in Caenorhabditis elegans.